A 357-amino-acid polypeptide reads, in one-letter code: MSKCGRKKYMRTNVRQMTMETVESQQDRSVTHSVAEHSSAHMQTGQISVPTLAQVSVAGSGTGRGSPAVTLVQLPSGQTVQVQGVIQTPHPSVIQSPQIQTVQVATIAETDDSADSEVIDSHKRREILSRRPSYRKILNELSSDVPGIPKIEEEKSEEEGTPPNIATMAVPTSIYQTSTGQYIAIAQGGTIQISNPGSDGVQGLQALTMTNSGAPPPGATIVQYAAQSADGTQQFFVPGSQVVVQDEETDLAPSHMAAATGDMPTYQIRAPTTALPQGVVMAASPGSLHSPQQLAEEATRKRELRLMKNREAAKECRRRKKEYVKCLESRVAVLEVQNKKLIEELETLKDICSPKTD.

The region spanning 101-160 is the KID domain; the sequence is TVQVATIAETDDSADSEVIDSHKRREILSRRPSYRKILNELSSDVPGIPKIEEEKSEEEG. Phosphoserine occurs at positions 116, 142, 284, 287, and 290. Positions 299–357 constitute a bZIP domain; the sequence is TRKRELRLMKNREAAKECRRRKKEYVKCLESRVAVLEVQNKKLIEELETLKDICSPKTD. Residues 300 to 325 are basic motif; that stretch reads RKRELRLMKNREAAKECRRRKKEYVK. Positions 327 to 348 are leucine-zipper; that stretch reads LESRVAVLEVQNKKLIEELETL.

It belongs to the bZIP family. In terms of assembly, binds DNA as a dimer. Interacts with CDC34. Interacts with FHL5. Isoform delta forms a heterodimer with CREB3L4. May interact with TSSK4. In terms of processing, stimulated by phosphorylation. Phosphorylated on Ser-116 by TSSK4 in vitro. Post-translationally, ubiquitinated by CDC34 and RAD6B in order to be degraded by the proteasome. In terms of tissue distribution, isoform Tau is expressed in testis germ cells. CREM-theta1- and CREM-theta2-containing isoforms are expressed in testis.

It is found in the nucleus. In terms of biological role, transcriptional regulator that binds the cAMP response element (CRE), a sequence present in many viral and cellular promoters. Isoforms are either transcriptional activators or repressors. Isoform Delta is an activator. Plays a role in spermatogenesis and is involved in spermatid maturation. Binding of isoform Tau (activator) to CRE is increased by CREB3L4. The CREM isoform Tau-CREB3L4 heterodimer functions through CRE and may recruit HIRA to CRE to regulate histone exchange. The polypeptide is cAMP-responsive element modulator (Crem) (Rattus norvegicus (Rat)).